The primary structure comprises 231 residues: Type 3 secretion system stator protein (231 aa).

In terms of assembly, the core secretion machinery of the T3SS is composed of approximately 20 different proteins, including cytoplasmic components, a base, an export apparatus and a needle. This subunit is part of the cytosolic complex. Interacts directly with Spa47/SctN (T3SS ATPase) and Spa33/SctQ (the major sorting platform component). Homodimer in solution.

The protein localises to the cytoplasm. Functionally, component of the type III secretion system (T3SS), also called injectisome, which is used to inject bacterial effector proteins into eukaryotic host cells. Acts as a regulator of the Spa47/SctN ATPase activity. It down-regulates the ATPase activity of the oligomeric Spa47/SctN, while it up-regulates the activity of the monomeric form. Important for translocation of MxiH/SctF, the major needle component. The polypeptide is Type 3 secretion system stator protein (Shigella flexneri).